Consider the following 70-residue polypeptide: Brevinin-1MT1 (70 aa).

A signal peptide spans 1 to 22 (MFTLKKSLLLLFFLGTINLSLC). The propeptide occupies 23–44 (EQERDADEEERRDDDEMDVEVE). Cys64 and Cys70 are oxidised to a cystine.

It belongs to the frog skin active peptide (FSAP) family. Brevinin subfamily. As to expression, expressed by the skin glands.

The protein localises to the secreted. Antimicrobial peptide with activity against a variety of Gram-negative and Gram-positive bacteria and against fungi. Shows strong hemolytic activity against human erythrocytes. The protein is Brevinin-1MT1 of Amolops mantzorum (Sichuan torrent frog).